Consider the following 481-residue polypeptide: Sterol 14-alpha demethylase (481 aa).

The helical transmembrane segment at 1–21 (MFIEAIVLALTALILYSVYSV) threads the bilayer. Cys-422 contributes to the heme binding site.

This sequence belongs to the cytochrome P450 family. Heme serves as cofactor.

Its subcellular location is the membrane. It catalyses the reaction a 14alpha-methyl steroid + 3 reduced [NADPH--hemoprotein reductase] + 3 O2 = a Delta(14) steroid + formate + 3 oxidized [NADPH--hemoprotein reductase] + 4 H2O + 4 H(+). It functions in the pathway steroid biosynthesis; zymosterol biosynthesis; zymosterol from lanosterol: step 1/6. In terms of biological role, catalyzes C14-demethylation of lanosterol which is critical for ergosterol biosynthesis. It transforms lanosterol into 4,4'-dimethyl cholesta-8,14,24-triene-3-beta-ol. Favors C4 dimethylated substrates, the substrate preference order is 24-methylenedihydrolanosterol &gt; 24,25-dihydrolanosterol &gt; lanosterol &gt; obtusifoliol &gt; norlanosterol. The polypeptide is Sterol 14-alpha demethylase (Trypanosoma cruzi (strain CL Brener)).